A 270-amino-acid polypeptide reads, in one-letter code: MENQPVRWRALPGLPRPPGLPAAPWLLLGVLLLPGTLRLAGGQSVTHTGLPIMASLANTAISFSCRITYPYTPQFKVFTVSYFHEDLQGQRSPKKPTNCHPGLGTENQSHTLDCQVTLVLPGASATGTYYCSVHWPHSTVRGSGTFILVRDAGYREPPQSPQKLLLFGFTGLLSVLSVVGTALLLWNKKRMRGPGKDPTRKCPDPRSASSPKQHPSESVYTALQRRETEVYACIENEDGSSPTAKQSPLSQERPHRFEDDGELNLVYENL.

Residues 1–42 (MENQPVRWRALPGLPRPPGLPAAPWLLLGVLLLPGTLRLAGG) form the signal peptide. The Extracellular portion of the chain corresponds to 43–163 (QSVTHTGLPI…YREPPQSPQK (121 aa)). The Ig-like V-type domain maps to 50–150 (LPIMASLANT…RGSGTFILVR (101 aa)). C65 and C114 are disulfide-bonded. A glycan (N-linked (GlcNAc...) asparagine) is linked at N107. Residues 164 to 184 (LLLFGFTGLLSVLSVVGTALL) traverse the membrane as a helical segment. Over 185 to 270 (LWNKKRMRGP…GELNLVYENL (86 aa)) the chain is Cytoplasmic. The interval 190 to 219 (RMRGPGKDPTRKCPDPRSASSPKQHPSESV) is disordered. The segment covering 194–204 (PGKDPTRKCPD) has biased composition (basic and acidic residues). Polar residues predominate over residues 207 to 219 (SASSPKQHPSESV). The region spanning 209-237 (SSPKQHPSESVYTALQRRETEVYACIENE) is the ITAM domain. Y220 and Y231 each carry phosphotyrosine. The tract at residues 234 to 262 (IENEDGSSPTAKQSPLSQERPHRFEDDGE) is disordered. A compositionally biased stretch (polar residues) spans 239–250 (GSSPTAKQSPLS).

In terms of assembly, no direct interaction with the B-cell antigen receptor (BCR). Interacts with SYK; probably involved in BCR signaling. Interacts with ZAP70. In terms of processing, N-glycosylated. Highly expressed in neutrophils, primary monocytes, mast cells, monocytic cell lines and lymphocytes. Also expressed in spleen B and T-cells, and lung. Expressed at low level in non-immune tissue.

It is found in the cell membrane. In terms of biological role, may function in immune system as a receptor which activates via the calcineurin/NFAT-signaling pathway the downstream cytokine gene promoters. Activates the transcription of IL-13 and TNF-alpha promoters. May be involved in the regulation of B-cell, but not T-cell, development. Overexpression activates downstream effectors without ligand binding or antibody cross-linking. This Homo sapiens (Human) protein is NFAT activation molecule 1 (NFAM1).